Consider the following 432-residue polypeptide: Enolase (432 aa).

Position 167 (glutamine 167) interacts with (2R)-2-phosphoglycerate. Glutamate 209 (proton donor) is an active-site residue. Positions 246, 290, and 317 each coordinate Mg(2+). (2R)-2-phosphoglycerate is bound by residues lysine 342, arginine 371, serine 372, and lysine 393. The Proton acceptor role is filled by lysine 342.

This sequence belongs to the enolase family. Component of the RNA degradosome, a multiprotein complex involved in RNA processing and mRNA degradation. The cofactor is Mg(2+).

It localises to the cytoplasm. The protein localises to the secreted. It is found in the cell surface. It catalyses the reaction (2R)-2-phosphoglycerate = phosphoenolpyruvate + H2O. The protein operates within carbohydrate degradation; glycolysis; pyruvate from D-glyceraldehyde 3-phosphate: step 4/5. Catalyzes the reversible conversion of 2-phosphoglycerate (2-PG) into phosphoenolpyruvate (PEP). It is essential for the degradation of carbohydrates via glycolysis. The protein is Enolase of Salmonella dublin (strain CT_02021853).